We begin with the raw amino-acid sequence, 236 residues long: Thrombin-like enzyme kangshuanmei (236 aa).

In terms of domain architecture, Peptidase S1 spans 1-227 (VIGGDECNIN…HLDWIQSIIA (227 aa)). 6 cysteine pairs are disulfide-bonded: Cys7-Cys141, Cys28-Cys44, Cys78-Cys234, Cys120-Cys188, Cys152-Cys167, and Cys178-Cys203. The Charge relay system role is filled by His43. Residue Asn81 is glycosylated (N-linked (GlcNAc...) asparagine). Asp88 (charge relay system) is an active-site residue. Asn99 and Asn148 each carry an N-linked (GlcNAc...) asparagine glycan. Ser182 serves as the catalytic Charge relay system. An N-linked (GlcNAc...) asparagine glycan is attached at Asn229.

It belongs to the peptidase S1 family. Snake venom subfamily. As to quaternary structure, monomer. Post-translationally, N-glycosylated by units composed of Fuc, Man, GlcNAc, Gal and NeuAC residues. As to expression, expressed by the venom gland.

Its subcellular location is the secreted. Inhibited by 4-(2-aminoethyl)-benzensulfonyl fluoride. Not inhibited by antithrombin-III. In terms of biological role, thrombin-like snake venom serine protease. Cleaves bonds after Arg and Lys, converts fibrinogen (FGA and FGB) to fibrin and releases both fibrinopeptides A and B, and fibrinogen peptide Bbeta1-42. Has a blood clotting activity. The protein is Thrombin-like enzyme kangshuanmei of Gloydius brevicauda (Korean slamosa snake).